Reading from the N-terminus, the 222-residue chain is 2-C-methyl-D-erythritol 4-phosphate cytidylyltransferase (222 aa).

Belongs to the IspD/TarI cytidylyltransferase family. IspD subfamily.

It carries out the reaction 2-C-methyl-D-erythritol 4-phosphate + CTP + H(+) = 4-CDP-2-C-methyl-D-erythritol + diphosphate. The protein operates within isoprenoid biosynthesis; isopentenyl diphosphate biosynthesis via DXP pathway; isopentenyl diphosphate from 1-deoxy-D-xylulose 5-phosphate: step 2/6. Its function is as follows. Catalyzes the formation of 4-diphosphocytidyl-2-C-methyl-D-erythritol from CTP and 2-C-methyl-D-erythritol 4-phosphate (MEP). In Azobacteroides pseudotrichonymphae genomovar. CFP2, this protein is 2-C-methyl-D-erythritol 4-phosphate cytidylyltransferase.